The following is a 103-amino-acid chain: UPF0473 protein SSA_2239 (103 aa).

This sequence belongs to the UPF0473 family.

This chain is UPF0473 protein SSA_2239, found in Streptococcus sanguinis (strain SK36).